We begin with the raw amino-acid sequence, 1468 residues long: ABC transporter G family member 34 (1468 aa).

Residues 33–53 form a disordered region; the sequence is NGAFSRSSSSSSRRMRGEEDD. The ABC transporter 1 domain occupies 178–450; that stretch reads ANALGILPTR…FELMGFKCPE (273 aa). ATP is bound at residue 211–218; sequence GPPGSGKT. Residues 528-741 enclose the ABC transmembrane type-2 1 domain; that stretch reads ELLKANIDRE…AQNAVSVNEF (214 aa). The next 6 helical transmembrane spans lie at 546-566, 575-595, 634-654, 666-686, 690-710, and 778-798; these read FVYI…MTVF, SVAD…MIML, SPMS…VIGF, LLML…GGAA, IVAN…GGFI, and IGFG…TLAL. The ABC transporter 2 domain occupies 871–1123; that stretch reads LTFEDIKYSV…ELIKYFEGIQ (253 aa). 916 to 923 serves as a coordination point for ATP; that stretch reads GVSGAGKT. One can recognise an ABC transmembrane type-2 2 domain in the interval 1196–1410; it reads IQCLACLWKQ…TLYGLIVSQY (215 aa). 7 consecutive transmembrane segments (helical) span residues 1217–1237, 1247–1267, 1303–1323, 1330–1350, 1360–1380, 1387–1407, and 1440–1460; these read AIRL…FWDL, LFNA…LNGQ, FPYT…MIGF, FFWY…YGMM, VASI…GFVI, VWWR…GLIV, and FVAV…GFAI.

It belongs to the ABC transporter superfamily. ABCG family. PDR (TC 3.A.1.205) subfamily.

It is found in the membrane. Functionally, may be a general defense protein. The protein is ABC transporter G family member 34 of Oryza sativa subsp. japonica (Rice).